Here is a 170-residue protein sequence, read N- to C-terminus: Large ribosomal subunit protein uL11 (170 aa).

This sequence belongs to the universal ribosomal protein uL11 family. In terms of assembly, part of the ribosomal stalk of the 50S ribosomal subunit. Interacts with L10 and the large rRNA to form the base of the stalk. L10 forms an elongated spine to which L12 dimers bind in a sequential fashion forming a multimeric L10(L12)X complex.

Functionally, forms part of the ribosomal stalk which helps the ribosome interact with GTP-bound translation factors. This Desulfurococcus amylolyticus (strain DSM 18924 / JCM 16383 / VKM B-2413 / 1221n) (Desulfurococcus kamchatkensis) protein is Large ribosomal subunit protein uL11.